The sequence spans 525 residues: Glutamyl-tRNA(Gln) amidotransferase subunit A, mitochondrial (525 aa).

Catalysis depends on charge relay system residues Lys76 and Ser168. The Acyl-ester intermediate role is filled by Ser192.

The protein belongs to the amidase family. GatA subfamily. Subunit of the heterotrimeric GatCAB amidotransferase (AdT) complex, composed of A (QRSL1), B (GATB) and C (GATC) subunits.

It localises to the mitochondrion. It carries out the reaction L-glutamyl-tRNA(Gln) + L-glutamine + ATP + H2O = L-glutaminyl-tRNA(Gln) + L-glutamate + ADP + phosphate + H(+). Its function is as follows. Allows the formation of correctly charged Gln-tRNA(Gln) through the transamidation of misacylated Glu-tRNA(Gln) in the mitochondria. The reaction takes place in the presence of glutamine and ATP through an activated gamma-phospho-Glu-tRNA(Gln). This Rattus norvegicus (Rat) protein is Glutamyl-tRNA(Gln) amidotransferase subunit A, mitochondrial (Qrsl1).